We begin with the raw amino-acid sequence, 387 residues long: Succinate--CoA ligase [ADP-forming] subunit beta (387 aa).

In terms of domain architecture, ATP-grasp spans 9–244; the sequence is KALLQRYGVN…WSQDDAKEAE (236 aa). Residues lysine 46, 53 to 55, glutamate 99, leucine 102, and glutamate 107 each bind ATP; that span reads GRG. Asparagine 199 and aspartate 213 together coordinate Mg(2+). Substrate contacts are provided by residues asparagine 264 and 321–323; that span reads GIM.

Belongs to the succinate/malate CoA ligase beta subunit family. In terms of assembly, heterotetramer of two alpha and two beta subunits. It depends on Mg(2+) as a cofactor.

The catalysed reaction is succinate + ATP + CoA = succinyl-CoA + ADP + phosphate. It catalyses the reaction GTP + succinate + CoA = succinyl-CoA + GDP + phosphate. It participates in carbohydrate metabolism; tricarboxylic acid cycle; succinate from succinyl-CoA (ligase route): step 1/1. In terms of biological role, succinyl-CoA synthetase functions in the citric acid cycle (TCA), coupling the hydrolysis of succinyl-CoA to the synthesis of either ATP or GTP and thus represents the only step of substrate-level phosphorylation in the TCA. The beta subunit provides nucleotide specificity of the enzyme and binds the substrate succinate, while the binding sites for coenzyme A and phosphate are found in the alpha subunit. The protein is Succinate--CoA ligase [ADP-forming] subunit beta of Methylobacillus flagellatus (strain ATCC 51484 / DSM 6875 / VKM B-1610 / KT).